Here is a 341-residue protein sequence, read N- to C-terminus: Anthranilate phosphoribosyltransferase (341 aa).

5-phospho-alpha-D-ribose 1-diphosphate-binding positions include G79, 82 to 83 (GD), T87, 89 to 92 (NIST), 107 to 115 (KHGNRAASS), and S119. Position 79 (G79) interacts with anthranilate. A Mg(2+)-binding site is contributed by S91. Residue N110 coordinates anthranilate. An anthranilate-binding site is contributed by R165. 2 residues coordinate Mg(2+): D224 and E225.

It belongs to the anthranilate phosphoribosyltransferase family. Homodimer. Mg(2+) serves as cofactor.

It carries out the reaction N-(5-phospho-beta-D-ribosyl)anthranilate + diphosphate = 5-phospho-alpha-D-ribose 1-diphosphate + anthranilate. Its pathway is amino-acid biosynthesis; L-tryptophan biosynthesis; L-tryptophan from chorismate: step 2/5. Its function is as follows. Catalyzes the transfer of the phosphoribosyl group of 5-phosphorylribose-1-pyrophosphate (PRPP) to anthranilate to yield N-(5'-phosphoribosyl)-anthranilate (PRA). This Dehalococcoides mccartyi (strain ATCC BAA-2266 / KCTC 15142 / 195) (Dehalococcoides ethenogenes (strain 195)) protein is Anthranilate phosphoribosyltransferase.